A 208-amino-acid chain; its full sequence is Receptor expression-enhancing protein 6 (208 aa).

3 consecutive transmembrane segments (helical) span residues 49-69 (GAFL…GFVY), 93-113 (WVIY…LHWF), and 115-135 (FYYV…SWNG). The segment at 187 to 208 (VGPAESEPRSLPSSAHTEPTVD) is disordered. The segment covering 197–208 (LPSSAHTEPTVD) has biased composition (polar residues).

The protein belongs to the DP1 family.

Its subcellular location is the endoplasmic reticulum membrane. The protein resides in the cytoplasmic vesicle. The protein localises to the clathrin-coated vesicle membrane. Required correct function and survival of retinal photoreceptors. Required for retinal development. In rod photoreceptors, facilitates stability and/or trafficking of guanylate cyclases and is required to maintain endoplasmic reticulum and mitochondrial homeostasis. May play a role in clathrin-coated intracellular vesicle trafficking of proteins from the endoplasmic reticulum to the retinal rod plasma membrane. This is Receptor expression-enhancing protein 6 from Danio rerio (Zebrafish).